The primary structure comprises 146 residues: 3-hydroxyacyl-[acyl-carrier-protein] dehydratase FabZ (146 aa).

Residue H49 is part of the active site.

The protein belongs to the thioester dehydratase family. FabZ subfamily.

It is found in the cytoplasm. It catalyses the reaction a (3R)-hydroxyacyl-[ACP] = a (2E)-enoyl-[ACP] + H2O. Its function is as follows. Involved in unsaturated fatty acids biosynthesis. Catalyzes the dehydration of short chain beta-hydroxyacyl-ACPs and long chain saturated and unsaturated beta-hydroxyacyl-ACPs. This Wolbachia sp. subsp. Brugia malayi (strain TRS) protein is 3-hydroxyacyl-[acyl-carrier-protein] dehydratase FabZ.